The primary structure comprises 374 residues: Alcohol dehydrogenase S chain (374 aa).

At Ser-2 the chain carries N-acetylserine. Positions 47, 68, 98, 101, 104, 112, and 174 each coordinate Zn(2+). Residues 199–204, Asp-223, Lys-228, 292–294, and Arg-369 each bind NAD(+); these read GLGGVG and VGV.

This sequence belongs to the zinc-containing alcohol dehydrogenase family. Class-I subfamily. In terms of assembly, dimer of identical or non-identical chains of two types (E and S) coded by 2 separate genes at different loci. Zn(2+) is required as a cofactor.

It is found in the cytoplasm. The enzyme catalyses a primary alcohol + NAD(+) = an aldehyde + NADH + H(+). It catalyses the reaction a secondary alcohol + NAD(+) = a ketone + NADH + H(+). The protein is Alcohol dehydrogenase S chain of Equus caballus (Horse).